Here is an 82-residue protein sequence, read N- to C-terminus: Small ribosomal subunit protein bS18 (82 aa).

Residues 1-20 form a disordered region; that stretch reads MAEVSSSTVRRPFHRRRKTC.

Belongs to the bacterial ribosomal protein bS18 family. As to quaternary structure, part of the 30S ribosomal subunit. Forms a tight heterodimer with protein bS6.

Its function is as follows. Binds as a heterodimer with protein bS6 to the central domain of the 16S rRNA, where it helps stabilize the platform of the 30S subunit. This chain is Small ribosomal subunit protein bS18, found in Allorhizobium ampelinum (strain ATCC BAA-846 / DSM 112012 / S4) (Agrobacterium vitis (strain S4)).